Reading from the N-terminus, the 28-residue chain is M-poneritoxin-Da4b (28 aa).

Alanine amide is present on alanine 28.

Expressed by the venom gland.

The protein resides in the secreted. Its function is as follows. The synthetic peptide has antimicrobial activity against the Gram-positive bacteria B.amyloliquefacies S499 (MIC=0.05 mM), L.monocytogenes 2231 and S.aureus ATCC 29213, against the Gram-negative bacteria P.putida BTP1, P.aeruginosa PaO1 and E.coli ATCC 10536, and against the fungi S.cerevisiae, R.mucilaginosa and C.cucumerinum. It is not active against the fungi F.oxysporum and B.cinerea. The chain is M-poneritoxin-Da4b from Dinoponera australis (Giant neotropical hunting ant).